The following is a 252-amino-acid chain: Proteasome subunit alpha 1 (252 aa).

Position 1 is an N-acetylmethionine; alternate (methionine 1).

It belongs to the peptidase T1A family. As to quaternary structure, the 20S proteasome core is composed of 14 alpha and 14 beta subunits that assemble into four stacked heptameric rings, resulting in a barrel-shaped structure. The two inner rings, each composed of seven catalytic beta subunits, are sandwiched by two outer rings, each composed of seven alpha subunits. H.volcanii produces at least 2 types of 20S proteasomes: an alpha1-beta proteasome and a proteasome containing all three subunits (alpha1, alpha2, and beta) that appears to be asymmetrical with homo-oligomeric alpha1 and alpha2 rings positioned on separate ends. The catalytic chamber with the active sites is on the inside of the barrel. Has probably a gated structure, the ends of the cylinder being occluded by the N-termini of the alpha-subunits. Is likely capped at one or both ends by the proteasome regulatory ATPase, PAN. Acetylated. The acetylated form at Met-1 was shown to be in 100-fold excess of the unacetylated form with the initiator methionine removed in whole cells and purified 20S proteasomes.

The protein resides in the cytoplasm. Its activity is regulated as follows. The formation of the proteasomal ATPase PAN-20S proteasome complex, via the docking of the C-termini of PAN into the intersubunit pockets in the alpha-rings, triggers opening of the gate for substrate entry. Interconversion between the open-gate and close-gate conformations leads to a dynamic regulation of the 20S proteasome proteolysis activity. In vitro, the chymotrypsin-like activity of the alpha1-beta proteasome is potently inhibited by carbobenzoxyl-leucinyl-leucinyl-leucinal-H (MG132) and significantly by N-acetyl-leucinyl-leucinyl-norleucinal-H (calpain inhibitor I). Functionally, component of the proteasome core, a large protease complex with broad specificity involved in protein degradation. The H.volcanii alpha1-beta proteasome is able to cleave oligopeptides after Phe, Tyr and Trp, poorly after Glu but not after Arg. Thus, displays chymotrypsin-like activity, low caspase-like activity but no trypsin-like activity. The chain is Proteasome subunit alpha 1 from Haloferax volcanii (strain ATCC 29605 / DSM 3757 / JCM 8879 / NBRC 14742 / NCIMB 2012 / VKM B-1768 / DS2) (Halobacterium volcanii).